A 388-amino-acid polypeptide reads, in one-letter code: Putative pyridoxal phosphate-dependent aminotransferase EpsN (388 aa).

An N6-(pyridoxal phosphate)lysine modification is found at Lys-190.

This sequence belongs to the DegT/DnrJ/EryC1 family. It depends on pyridoxal 5'-phosphate as a cofactor.

Functionally, may be involved in the production of the exopolysaccharide (EPS) component of the extracellular matrix during biofilm formation. EPS is responsible for the adhesion of chains of cells into bundles. In Bacillus subtilis (strain 168), this protein is Putative pyridoxal phosphate-dependent aminotransferase EpsN (epsN).